A 218-amino-acid chain; its full sequence is Probable GTP-binding protein EngB (218 aa).

Positions 31 to 205 constitute an EngB-type G domain; sequence VGVEIAFAGR…LGILNEWCHP (175 aa). GTP contacts are provided by residues 39–46, 66–70, 84–87, 151–154, and 184–186; these read GRSNAGKS, GRTQL, DLPG, TKCD, and FSS. Ser-46 and Thr-68 together coordinate Mg(2+).

It belongs to the TRAFAC class TrmE-Era-EngA-EngB-Septin-like GTPase superfamily. EngB GTPase family. Mg(2+) serves as cofactor.

In terms of biological role, necessary for normal cell division and for the maintenance of normal septation. This chain is Probable GTP-binding protein EngB, found in Shewanella loihica (strain ATCC BAA-1088 / PV-4).